A 36-amino-acid chain; its full sequence is Lambda-hexatoxin-Hv1b (36 aa).

Disulfide bonds link Cys-3–Cys-17, Cys-10–Cys-22, Cys-13–Cys-14, and Cys-16–Cys-33.

The protein belongs to the neurotoxin 11 (kappa toxin) family. In terms of tissue distribution, expressed by the venom gland.

Its subcellular location is the secreted. Its function is as follows. This excitatory toxin inhibits insect calcium-activated potassium (KCa) channels (Slo-type). This chain is Lambda-hexatoxin-Hv1b, found in Hadronyche versuta (Blue mountains funnel-web spider).